A 323-amino-acid chain; its full sequence is MIRSTVRGVGAALPRRVVTNKDLETRLETSDEWIVQRTGIRQRHIASDDETTASLGEAAALRALDAAGLAPADIDLIVVATSTPNNTFPATAVEIQERLGIRQGFAFDMQAVCSGFVYAVTTADLYIRGGMAKRALVIGAETFSRILDWTDRTTCVLFGDGAGAIVLEAEEGQGDISDRGILAEALRSDGSHKEKLYVDGGPSTTRTVGHLRMQGREVFKHAVGMITDVIEDVFGQAGITAEDIDWFVSHQANKRIIDASAKKLGIAEEKVVITVDLHGNTSAASVPLALNHAVSQGKIQKGDLVLLEAMGGGFTWGAVLLRW.

Catalysis depends on residues C113 and H250. The ACP-binding stretch occupies residues 251–255 (QANKR). N280 is an active-site residue.

The protein belongs to the thiolase-like superfamily. FabH family. As to quaternary structure, homodimer.

The protein resides in the cytoplasm. The enzyme catalyses malonyl-[ACP] + acetyl-CoA + H(+) = 3-oxobutanoyl-[ACP] + CO2 + CoA. The protein operates within lipid metabolism; fatty acid biosynthesis. Functionally, catalyzes the condensation reaction of fatty acid synthesis by the addition to an acyl acceptor of two carbons from malonyl-ACP. Catalyzes the first condensation reaction which initiates fatty acid synthesis and may therefore play a role in governing the total rate of fatty acid production. Possesses both acetoacetyl-ACP synthase and acetyl transacylase activities. Its substrate specificity determines the biosynthesis of branched-chain and/or straight-chain of fatty acids. This is Beta-ketoacyl-[acyl-carrier-protein] synthase III from Chelativorans sp. (strain BNC1).